The chain runs to 160 residues: Transcriptional repressor NrdR (160 aa).

Positions 1-11 (MRCPSCSSLDT) are enriched in polar residues. Positions 1–20 (MRCPSCSSLDTQVKDSRPTE) are disordered. A zinc finger spans residues 3-34 (CPSCSSLDTQVKDSRPTEDSSVIRRRRVCLAC). The ATP-cone domain occupies 49-139 (LTVIKRNGRR…VYRNFREAKD (91 aa)).

This sequence belongs to the NrdR family. The cofactor is Zn(2+).

Its function is as follows. Negatively regulates transcription of bacterial ribonucleotide reductase nrd genes and operons by binding to NrdR-boxes. The polypeptide is Transcriptional repressor NrdR (Rhodopseudomonas palustris (strain BisA53)).